An 83-amino-acid chain; its full sequence is Lipolysis-activating peptide 1-alpha chain (83 aa).

The signal sequence occupies residues 1 to 21; that stretch reads MNIILFYFMPILISLPGLLAS. The 62-residue stretch at 22–83 folds into the LCN-type CS-alpha/beta domain; the sequence is GTYPNDVYGL…LFWDVYKEHC (62 aa). 3 cysteine pairs are disulfide-bonded: Cys-35–Cys-58, Cys-44–Cys-63, and Cys-48–Cys-65.

The protein belongs to the long (3 C-C) scorpion toxin superfamily. In terms of assembly, monomer (edited version) and heterodimer (non-edited version) of this alpha chain and a beta chain (AC P0CI43). In terms of tissue distribution, expressed by the venom gland.

It localises to the secreted. Its function is as follows. The heterodimer non-edited LVP1 induces lipolysis in rat adipocytes. Induction of lipolysis by LVP1 appears to be mediated through the beta-2 adrenergic receptor pathway (ADRB2). Functionally, the edited BmKBTx-like, similar to beta-toxins, may modulate voltage-gated sodium channels (Nav) and may block voltage-gated potassium channels (Kv). The chain is Lipolysis-activating peptide 1-alpha chain from Lychas mucronatus (Chinese swimming scorpion).